We begin with the raw amino-acid sequence, 151 residues long: Superoxide dismutase [Cu-Zn] (151 aa).

Cys-6 is lipidated: S-palmitoyl cysteine. Residues His-45, His-47, and His-62 each contribute to the Cu cation site. Residues Cys-56 and Cys-144 are joined by a disulfide bond. Zn(2+)-binding residues include His-62, His-70, His-79, and Asp-82. His-118 provides a ligand contact to Cu cation.

The protein belongs to the Cu-Zn superoxide dismutase family. Homodimer. Requires Cu cation as cofactor. The cofactor is Zn(2+).

The protein resides in the cytoplasm. The protein localises to the nucleus. It catalyses the reaction 2 superoxide + 2 H(+) = H2O2 + O2. In terms of biological role, destroys radicals which are normally produced within the cells and which are toxic to biological systems. The sequence is that of Superoxide dismutase [Cu-Zn] (sod1) from Xenopus tropicalis (Western clawed frog).